Here is a 238-residue protein sequence, read N- to C-terminus: Pyridoxine 5'-phosphate synthase (238 aa).

Asn6 contacts 3-amino-2-oxopropyl phosphate. 8–9 (DH) is a binding site for 1-deoxy-D-xylulose 5-phosphate. Position 17 (Arg17) interacts with 3-amino-2-oxopropyl phosphate. His42 functions as the Proton acceptor in the catalytic mechanism. 1-deoxy-D-xylulose 5-phosphate contacts are provided by Arg44 and His49. Catalysis depends on Glu69, which acts as the Proton acceptor. Thr99 is a binding site for 1-deoxy-D-xylulose 5-phosphate. The Proton donor role is filled by His190. Residues Gly191 and 212-213 (GH) each bind 3-amino-2-oxopropyl phosphate.

It belongs to the PNP synthase family. As to quaternary structure, homooctamer; tetramer of dimers.

It is found in the cytoplasm. The enzyme catalyses 3-amino-2-oxopropyl phosphate + 1-deoxy-D-xylulose 5-phosphate = pyridoxine 5'-phosphate + phosphate + 2 H2O + H(+). It participates in cofactor biosynthesis; pyridoxine 5'-phosphate biosynthesis; pyridoxine 5'-phosphate from D-erythrose 4-phosphate: step 5/5. In terms of biological role, catalyzes the complicated ring closure reaction between the two acyclic compounds 1-deoxy-D-xylulose-5-phosphate (DXP) and 3-amino-2-oxopropyl phosphate (1-amino-acetone-3-phosphate or AAP) to form pyridoxine 5'-phosphate (PNP) and inorganic phosphate. In Chlorobium phaeobacteroides (strain BS1), this protein is Pyridoxine 5'-phosphate synthase.